The following is a 245-amino-acid chain: MIIPALDLIDGTVVRLHQGDYGKQRDYGNDPLPRLQDYAAQGAEVLHLVDLTGAKDPAKRQIPLIKTLVAGVNVPVQVGGGVRSEEDVAALLEAGVARVVVGSTAVKSPERVKGWFERFGADALVLALDVRIDEQGNKQVAVSGWQENSGVSLEQLVETYLPVGLKHVLCTDISRDGTLAGSNVSLYEEVCARYPQVAFQSSGGIGDINDVAALRGTGVRGVIVGRALLEGKFTVKEAIACWQNA.

D7 (proton acceptor) is an active-site residue. Catalysis depends on D129, which acts as the Proton donor.

The protein belongs to the HisA/HisF family.

The protein resides in the cytoplasm. The catalysed reaction is 1-(5-phospho-beta-D-ribosyl)-5-[(5-phospho-beta-D-ribosylamino)methylideneamino]imidazole-4-carboxamide = 5-[(5-phospho-1-deoxy-D-ribulos-1-ylimino)methylamino]-1-(5-phospho-beta-D-ribosyl)imidazole-4-carboxamide. It functions in the pathway amino-acid biosynthesis; L-histidine biosynthesis; L-histidine from 5-phospho-alpha-D-ribose 1-diphosphate: step 4/9. The chain is 1-(5-phosphoribosyl)-5-[(5-phosphoribosylamino)methylideneamino] imidazole-4-carboxamide isomerase from Escherichia coli (strain SMS-3-5 / SECEC).